The following is a 68-amino-acid chain: Agnoprotein (68 aa).

Residues 1 to 24 (MVLRQLSRQASVKVGKTWTGTKRR) lie on the Cytoplasmic side of the membrane. A phosphoserine; by host mark is found at Ser-7 and Ser-11. At Thr-21 the chain carries Phosphothreonine; by host. Residues 25–41 (AQRIFIFILELLLDFCR) traverse the membrane as a helical; Signal-anchor for type II membrane protein segment. Over 42-68 (GEDSVDGKKKKDSLTDKTETVTEKKES) the chain is Extracellular. A disordered region spans residues 44 to 68 (DSVDGKKKKDSLTDKTETVTEKKES).

This sequence belongs to the polyomavirus agnoprotein family. Homooligomer. Interacts with VP1. Interacts with large T antigen; this interaction may impact upon the activity of T-antigen on the control of viral gene transcription and replication. Interacts with small t antigen. Interacts with host CBX5; this interaction induces the dissociation of CBX5 from LBR, resulting in destabilization of the nuclear envelope. In terms of processing, phosphorylated by host PKC. Phosphorylation alters the stability and may also have an impact on the subcellular location.

Its subcellular location is the host cytoplasm. It localises to the host nucleus membrane. The protein resides in the host rough endoplasmic reticulum membrane. The protein localises to the host cell membrane. Its function is as follows. Alters the structure of the nuclear envelope by interacting with host CBX5 and disrupting CBX5 association with LBR. Involved in the perinuclear-nuclear localization of the capsid protein VP1 during virion assembly and maturation. Plays an important role in the release of progeny virions from infected cells and in viral propagation, probably by acting as a viral ionic channel in the host plasma membrane. Allows influx of extracellular calcium ions in the host cell. May contribute to viral genome transcription and translation of viral late proteins. The polypeptide is Agnoprotein (Simian virus 12 (strain wt100) (SV-12)).